Consider the following 517-residue polypeptide: Acetyl-coenzyme A carboxylase carboxyl transferase subunit beta, chloroplastic (517 aa).

4 stretches are compositionally biased toward basic and acidic residues: residues 1 to 17, 24 to 41, 48 to 65, and 72 to 81; these read MKPT…KSNE, GDNK…KSNE, and GDKQKDKKDG. Disordered stretches follow at residues 1 to 179 and 204 to 234; these read MKPT…KEEE and KHRD…DSEA. Positions 87 to 131 are enriched in acidic residues; the sequence is YDDEYEEDLEYDDEYEEDLEYDDEYEEDLEYDDEEYDDEYEEDLE. Basic and acidic residues-rich tracts occupy residues 132–179 and 209–229; these read GDNK…KEEE and KSVP…RDTD. The region spanning 243-514 is the CoA carboxyltransferase N-terminal domain; it reads LWVHCKLCSG…NSQVINIYNY (272 aa). Zn(2+) contacts are provided by Cys247, Cys250, Cys266, and Cys269. Residues 247–269 form a C4-type zinc finger; sequence CKLCSGFNYKKILKSKNNVCEQC.

Belongs to the AccD/PCCB family. In terms of assembly, acetyl-CoA carboxylase is a heterohexamer composed of biotin carboxyl carrier protein, biotin carboxylase and 2 subunits each of ACCase subunit alpha and ACCase plastid-coded subunit beta (accD). Requires Zn(2+) as cofactor.

It is found in the plastid. Its subcellular location is the chloroplast stroma. It catalyses the reaction N(6)-carboxybiotinyl-L-lysyl-[protein] + acetyl-CoA = N(6)-biotinyl-L-lysyl-[protein] + malonyl-CoA. The protein operates within lipid metabolism; malonyl-CoA biosynthesis; malonyl-CoA from acetyl-CoA: step 1/1. In terms of biological role, component of the acetyl coenzyme A carboxylase (ACC) complex. Biotin carboxylase (BC) catalyzes the carboxylation of biotin on its carrier protein (BCCP) and then the CO(2) group is transferred by the transcarboxylase to acetyl-CoA to form malonyl-CoA. This chain is Acetyl-coenzyme A carboxylase carboxyl transferase subunit beta, chloroplastic, found in Oenothera elata subsp. hookeri (Hooker's evening primrose).